The sequence spans 1153 residues: Bifunctional dioxygenase (DOX)-epoxy alcohol synthase (EAS) (1153 aa).

Positions 46 to 56 (SSKESPSRKSS) are enriched in low complexity. Residues 46–113 (SSKESPSRKS…TQHGDGTYPT (68 aa)) form a disordered region. Residues 57–74 (TIGQSTRNGSCQADTQKG) show a composition bias toward polar residues. The segment covering 81 to 98 (EKPKPVKENPMKKLKEMS) has biased composition (basic and acidic residues). Positions 177-525 (TDSLINELWE…DGKFDDDDLV (349 aa)) are fatty acid alpha-dioxygenase. His276 provides a ligand contact to heme b. Tyr454 is an active-site residue. His457 lines the heme b pocket. An epoxy alcohol synthase region spans residues 732–1153 (RVNITSYGGA…VTMRVMWDDE (422 aa)). Cys1086 serves as a coordination point for heme.

This sequence in the N-terminal section; belongs to the peroxidase family. It in the C-terminal section; belongs to the cytochrome P450 family. As to quaternary structure, homotetramer. Requires heme b as cofactor. Heme serves as cofactor.

The enzyme catalyses (9Z)-octadecenoate + O2 = (8R)-hydroperoxy-(9Z)-octadecenoate. The catalysed reaction is (9Z)-octadecenoate + O2 = 10-hydroperoxy-(8E)-octadecenoate. It carries out the reaction (9Z,12Z)-octadecadienoate + O2 = (8E,10R,12Z)-10-hydroperoxyoctadeca-8,12-dienoate. It catalyses the reaction (9Z,12Z,15Z)-octadecatrienoate + O2 = (10R)-hydroperoxy-(8E,12Z,15Z)-octadecatrienoate. The enzyme catalyses (9Z,12Z,15Z)-octadecatrienoate + O2 = (8R)-hydroperoxy-(9Z,12Z,15Z)-octadecatrienoate. The catalysed reaction is (11Z,14Z)-eicosadienoate + O2 = 12-hydroperoxy-(10E,14Z)-eicosadienoate. It carries out the reaction (11Z,14Z,17Z)-eicosatrienoate + O2 = 12-hydroperoxy-(10E,14Z,17Z)-eicosatrienoate. It catalyses the reaction (12R,13S)-epoxy-(9Z)-octadecenoate + O2 = (12R,13S)-epoxy-(10R)-hydroperoxy-(8E)-octadecenoate. The enzyme catalyses (8E,10R,12Z)-10-hydroperoxyoctadeca-8,12-dienoate = (12S,13R)-epoxy-(10R)-hydroxy-(8E)-octadecenoate. The catalysed reaction is (10R)-hydroperoxy-(8E,12Z,15Z)-octadecatrienoate = 12,13-epoxy-(10R)-hydroxy-(8E,15Z)-octadecadienoate. It carries out the reaction 12-hydroperoxy-(10E,14Z)-eicosadienoate = 10,11-epoxy-12-hydroxy-(14Z)-eicosenoate. It catalyses the reaction 12-hydroperoxy-(10E,14Z,17Z)-eicosatrienoate = 14,15-epoxy-12-hydroxy-(10E,17Z)-eicosadienoate. The enzyme catalyses (13R)-hydroperoxy-(9Z,11E)-octadecadienoate = (12R,13R)-epoxy-(11S)-hydroxy-(9Z)-octadecenoate. The catalysed reaction is (13S)-hydroperoxy-(9Z,11E)-octadecadienoate = (12R,13R)-epoxy-(11S)-hydroxy-(9Z)-octadecenoate. It carries out the reaction 12-hydroperoxy-(10E,14Z)-eicosadienoate = 14,15-epoxy-12-hydroxy-(10E)-eicosenoate. It catalyses the reaction 12-hydroperoxy-(10E,14Z,17Z)-eicosatrienoate = 10,11-epoxy-12-hydroxy-(14Z,17Z)-eicosadienoate. Bifunctional dioxygenase (DOX)-epoxy alcohol synthase (EAS) that converts linoleic acid (18:2n-6) sequentially to 10(R)-hydroperoxy-8(E),12(Z)-octadecadienoic acid (10R-HPODE) and 10R-HPODE further to 12 S(13R)-epoxy-10(R)-hydroxy-8(E)-octadecenoic acid as the end product. Oxygenation at C-10 occurs by retention of the pro-R hydrogen of C-8 of 18:2n-6, suggesting antarafacial hydrogen abstraction and oxygenation. The epoxy alcohol is formed from 10R-HPODE, likely by heterolytic cleavage of the dioxygen bond and subsequent intramolecular epoxidation of the 12(Z) double bond. The DOX domain is also able to oxygenate position C-8 of linoleic acid to produce 8(R)-hydroperoxy-8(E),12(Z)-octadecadienoic acid (8R-HPODE). Moreover, the DOX domain can oxygenate alpha-linolenic acid (18:3n-3) at C-8 or C-10 to produce respectively 8HOTrE and 10HOTrE, oleic acid (18:1n-9) at C-8 or C-10 to produce respectively 8-H(P)OME and 10-H(P)OME (with 8R stereoisomer to over 95%), eicosadienoic acid (20:2n-6) at C-10 or C-12 to produce respectively 10(11)-epoxy-12-hydroxy-14(Z)-eicosenoic acid and 14(15)-epoxy-12-hydroxy-10(E)-eicosenoic acid, as well as eicosatrienoic acid (20:3n-3) at C-10 or C-12 to produce respectively 10(11)-epoxy-12-hydroxy-14(Z),17(Z)-eicosadienoic acid and 14(15)-epoxy-12-hydroxy-14(Z),17(Z)-eicosadienoic acid. On the other side, the enzyme EAS domain can also catalyze the conversion of 10HOTrE into 12(13)-epoxy-10(R)-hydroxy-8(E),15(Z)-octadecadienoic acid, 13-R-HPODE into the stereoisomers of 12(13)-epoxy-11-hydroxy-9(Z)-octadecenoic acids (erythro/threo, 1:4), as well as 13S-HPODE into the stereoisomers of 12(13)-epoxy-11-hydroxy-9(Z)-octadecenoic acids (erythro/threo, 1:4) (EAS activity). Gamma-linolenic acid (18:3n-6) is not a substrate. The sequence is that of Bifunctional dioxygenase (DOX)-epoxy alcohol synthase (EAS) from Pyricularia oryzae (strain 70-15 / ATCC MYA-4617 / FGSC 8958) (Rice blast fungus).